A 622-amino-acid chain; its full sequence is Low affinity potassium transport system protein Kup (622 aa).

The next 12 helical transmembrane spans lie at 9–29, 49–69, 103–123, 137–157, 165–185, 213–233, 247–267, 276–296, 337–357, 363–383, 396–416, and 419–439; these read LSAI…TSPL, VFGF…IKYL, VIMG…TPAI, PELD…LFMI, VGKL…GLGL, VSFI…ALYA, WFSV…ALLL, PFFL…AALA, IYIP…IVSF, LAAA…ILST, FVAL…SANL, and LLSG…IMTT.

This sequence belongs to the HAK/KUP transporter (TC 2.A.72) family.

The protein resides in the cell inner membrane. The enzyme catalyses K(+)(in) + H(+)(in) = K(+)(out) + H(+)(out). Its function is as follows. Responsible for the low-affinity transport of potassium into the cell. Likely operates as a K(+):H(+) symporter. The sequence is that of Low affinity potassium transport system protein Kup from Citrobacter koseri (strain ATCC BAA-895 / CDC 4225-83 / SGSC4696).